The primary structure comprises 416 residues: Isobutyryl-CoA dehydrogenase, mitochondrial (416 aa).

The N-terminal 21 residues, 1 to 21, are a transit peptide targeting the mitochondrion; the sequence is MISGLFKLSNKQSVLQNATKL. FAD contacts are provided by residues 156 to 165 and 189 to 191; these read YCLTEPGSGS and FIS. Residue S165 coordinates substrate. 273–276 serves as a coordination point for substrate; the sequence is NGGR. FAD-binding positions include R301, 311–312, and 370–374; these read FQ and QLFGG. E397 functions as the Proton acceptor in the catalytic mechanism. 399-401 contributes to the FAD binding site; that stretch reads SDA. Substrate is bound at residue R409.

It belongs to the acyl-CoA dehydrogenase family. As to quaternary structure, homotetramer. FAD serves as cofactor.

Its subcellular location is the mitochondrion. The enzyme catalyses 2-methylpropanoyl-CoA + oxidized [electron-transfer flavoprotein] + H(+) = 2-methylpropenoyl-CoA + reduced [electron-transfer flavoprotein]. The catalysed reaction is (2S)-2-methylbutanoyl-CoA + oxidized [electron-transfer flavoprotein] + H(+) = (2E)-2-methylbut-2-enoyl-CoA + reduced [electron-transfer flavoprotein]. It carries out the reaction propanoyl-CoA + oxidized [electron-transfer flavoprotein] + H(+) = acryloyl-CoA + reduced [electron-transfer flavoprotein]. It functions in the pathway amino-acid degradation; L-valine degradation. Isobutyryl-CoA dehydrogenase which catalyzes one of the steps of the valine catabolic pathway. To a lesser extent, is also able to catalyze the oxidation of (2S)-2-methylbutanoyl-CoA. The protein is Isobutyryl-CoA dehydrogenase, mitochondrial (acad8) of Dictyostelium discoideum (Social amoeba).